The sequence spans 214 residues: Homologous-pairing protein 2 homolog (214 aa).

A coiled-coil region spans residues 79-147 (SDSELKDLDA…EHKLTNIKSA (69 aa)). The interval 115-179 (TSSLTTEEML…WKKRKRMATD (65 aa)) is DNA-binding.

It belongs to the HOP2 family.

It localises to the nucleus. Plays an important role in meiotic recombination. Stimulates DMC1-mediated strand exchange required for pairing of homologous chromosomes during meiosis. In Xenopus laevis (African clawed frog), this protein is Homologous-pairing protein 2 homolog (psmc3ip).